The chain runs to 122 residues: Small ribosomal subunit protein uS13 (122 aa).

Residues 95–122 are disordered; it reads GLPVRGQRTKTNARTRKGPKKTIAGKKK.

This sequence belongs to the universal ribosomal protein uS13 family. In terms of assembly, part of the 30S ribosomal subunit. Forms a loose heterodimer with protein S19. Forms two bridges to the 50S subunit in the 70S ribosome.

Functionally, located at the top of the head of the 30S subunit, it contacts several helices of the 16S rRNA. In the 70S ribosome it contacts the 23S rRNA (bridge B1a) and protein L5 of the 50S subunit (bridge B1b), connecting the 2 subunits; these bridges are implicated in subunit movement. Contacts the tRNAs in the A and P-sites. This Corynebacterium glutamicum (strain ATCC 13032 / DSM 20300 / JCM 1318 / BCRC 11384 / CCUG 27702 / LMG 3730 / NBRC 12168 / NCIMB 10025 / NRRL B-2784 / 534) protein is Small ribosomal subunit protein uS13.